A 468-amino-acid chain; its full sequence is uncharacterized protein (468 aa).

The signal sequence occupies residues M1–A27. PbH1 repeat units lie at residues K125–G154, S156–G185, M189–G214, I216–G238, V249–G283, G284–S305, A312–G334, and N397–K420.

Its subcellular location is the secreted. This is an uncharacterized protein from Bacillus subtilis (strain 168).